The primary structure comprises 173 residues: Small ribosomal subunit protein uS5 (173 aa).

An S5 DRBM domain is found at 17–80 (WQERVIQIRR…ADGKKQLIEV (64 aa)).

This sequence belongs to the universal ribosomal protein uS5 family. In terms of assembly, part of the 30S ribosomal subunit. Contacts proteins S4 and S8.

Its function is as follows. With S4 and S12 plays an important role in translational accuracy. Located at the back of the 30S subunit body where it stabilizes the conformation of the head with respect to the body. The sequence is that of Small ribosomal subunit protein uS5 from Synechocystis sp. (strain ATCC 27184 / PCC 6803 / Kazusa).